Here is a 148-residue protein sequence, read N- to C-terminus: Lysozyme C (148 aa).

Residues 1 to 18 (MKAVIILGLVLLSVTVQG) form the signal peptide. The C-type lysozyme domain maps to 19–148 (KIFERCELAR…VSQYVQGCGV (130 aa)). Intrachain disulfides connect C24–C146, C48–C134, C83–C99, and C95–C113. Catalysis depends on residues E53 and D71.

Belongs to the glycosyl hydrolase 22 family. In terms of assembly, monomer.

It is found in the secreted. It carries out the reaction Hydrolysis of (1-&gt;4)-beta-linkages between N-acetylmuramic acid and N-acetyl-D-glucosamine residues in a peptidoglycan and between N-acetyl-D-glucosamine residues in chitodextrins.. In terms of biological role, lysozymes have primarily a bacteriolytic function; those in tissues and body fluids are associated with the monocyte-macrophage system and enhance the activity of immunoagents. The sequence is that of Lysozyme C (LYZ) from Miopithecus talapoin (Angolan talapoin).